Here is a 132-residue protein sequence, read N- to C-terminus: Large ribosomal subunit protein bL12 (132 aa).

The protein belongs to the bacterial ribosomal protein bL12 family. In terms of assembly, homodimer. Part of the ribosomal stalk of the 50S ribosomal subunit. Forms a multimeric L10(L12)X complex, where L10 forms an elongated spine to which 2 to 4 L12 dimers bind in a sequential fashion. Binds GTP-bound translation factors.

In terms of biological role, forms part of the ribosomal stalk which helps the ribosome interact with GTP-bound translation factors. Is thus essential for accurate translation. This Chloroflexus aurantiacus (strain ATCC 29366 / DSM 635 / J-10-fl) protein is Large ribosomal subunit protein bL12.